Here is a 425-residue protein sequence, read N- to C-terminus: Serine--tRNA ligase (425 aa).

L-serine is bound at residue 231-233 (TAE). 262-264 (RRE) contacts ATP. An L-serine-binding site is contributed by Glu285. 349–352 (EISS) is an ATP binding site. Ser385 serves as a coordination point for L-serine.

This sequence belongs to the class-II aminoacyl-tRNA synthetase family. Type-1 seryl-tRNA synthetase subfamily. Homodimer. The tRNA molecule binds across the dimer.

Its subcellular location is the cytoplasm. It carries out the reaction tRNA(Ser) + L-serine + ATP = L-seryl-tRNA(Ser) + AMP + diphosphate + H(+). The enzyme catalyses tRNA(Sec) + L-serine + ATP = L-seryl-tRNA(Sec) + AMP + diphosphate + H(+). It participates in aminoacyl-tRNA biosynthesis; selenocysteinyl-tRNA(Sec) biosynthesis; L-seryl-tRNA(Sec) from L-serine and tRNA(Sec): step 1/1. Catalyzes the attachment of serine to tRNA(Ser). Is also able to aminoacylate tRNA(Sec) with serine, to form the misacylated tRNA L-seryl-tRNA(Sec), which will be further converted into selenocysteinyl-tRNA(Sec). This chain is Serine--tRNA ligase, found in Aquifex aeolicus (strain VF5).